The following is an 850-amino-acid chain: Bifunctional levopimaradiene synthase, chloroplastic (850 aa).

Residues 1-52 (MALPSSSLSSQIHTGATTQCIPHFHGSLNAGTSAGKRRSLYLRWGKGPSKIV) constitute a chloroplast transit peptide. Lys250 lines the substrate pocket. Mg(2+) contacts are provided by Asp383 and Asp385. The DXDD motif motif lies at 383-386 (DIDD). Substrate is bound at residue Lys470. Mg(2+)-binding residues include Asp602, Asp606, Asn746, Thr750, and Glu754. Positions 602-606 (DDLYD) match the DDXXD motif motif.

This sequence belongs to the terpene synthase family. Tpsd subfamily. Mg(2+) is required as a cofactor. In terms of tissue distribution, expressed in young tissues such as flushing buds and green bark tissues. Lower levels in mature needles and bark.

Its subcellular location is the plastid. The protein localises to the chloroplast. It catalyses the reaction (2E,6E,10E)-geranylgeranyl diphosphate = (+)-copalyl diphosphate. The catalysed reaction is (+)-copalyl diphosphate = abieta-8(14),12-diene + diphosphate. It carries out the reaction (+)-copalyl diphosphate = neoabietadiene + diphosphate. Its pathway is terpene metabolism; oleoresin biosynthesis. Involved in defensive oleoresin formation in conifers in response to insect attack or other injury. Involved in diterpene (C20) olefins biosynthesis. Bifunctional enzyme that catalyzes two sequential cyclizations of geranylgeranyl diphosphate (GGPP) to levopimaradiene. Levopimaradiene is the major products of the enzyme followed by abietadiene, neoabietadiene and palustradiene. No activity with geranyl diphosphate (GPP) or farnesyl diphosphate (FPP) as substrate. The sequence is that of Bifunctional levopimaradiene synthase, chloroplastic (LPS) from Pinus taeda (Loblolly pine).